The following is a 241-amino-acid chain: ATP phosphoribosyltransferase (241 aa).

It belongs to the ATP phosphoribosyltransferase family. Short subfamily. In terms of assembly, heteromultimer composed of HisG and HisZ subunits.

The protein resides in the cytoplasm. The enzyme catalyses 1-(5-phospho-beta-D-ribosyl)-ATP + diphosphate = 5-phospho-alpha-D-ribose 1-diphosphate + ATP. It functions in the pathway amino-acid biosynthesis; L-histidine biosynthesis; L-histidine from 5-phospho-alpha-D-ribose 1-diphosphate: step 1/9. Its function is as follows. Catalyzes the condensation of ATP and 5-phosphoribose 1-diphosphate to form N'-(5'-phosphoribosyl)-ATP (PR-ATP). Has a crucial role in the pathway because the rate of histidine biosynthesis seems to be controlled primarily by regulation of HisG enzymatic activity. The chain is ATP phosphoribosyltransferase from Gluconobacter oxydans (strain 621H) (Gluconobacter suboxydans).